The sequence spans 187 residues: Adenylate kinase (187 aa).

G10–T15 contributes to the ATP binding site. The interval S30–V59 is NMP. Residues T31, R36, D57–V59, G85–R88, and Q92 contribute to the AMP site. Positions G126–D136 are LID. R127 serves as a coordination point for ATP. The AMP site is built by R133 and R144. G172 is an ATP binding site.

It belongs to the adenylate kinase family. As to quaternary structure, monomer.

It localises to the cytoplasm. The enzyme catalyses AMP + ATP = 2 ADP. The protein operates within purine metabolism; AMP biosynthesis via salvage pathway; AMP from ADP: step 1/1. Catalyzes the reversible transfer of the terminal phosphate group between ATP and AMP. Plays an important role in cellular energy homeostasis and in adenine nucleotide metabolism. This is Adenylate kinase from Xylella fastidiosa (strain M12).